The chain runs to 158 residues: C-type lectin galactose-binding isoform (158 aa).

Positions 1 to 23 (MGRFLLVTLSLLVMAFFLNGANS) are cleaved as a signal peptide. 3 cysteine pairs are disulfide-bonded: cysteine 26–cysteine 37, cysteine 54–cysteine 154, and cysteine 129–cysteine 146. The 123-residue stretch at 33–155 (RNGFCYKVFN…CTALRPFLCQ (123 aa)) folds into the C-type lectin domain. Ca(2+)-binding residues include glutamine 119, aspartate 121, and glutamate 127. The short motif at 119-121 (QPD) is the Galactose-binding element. An N-linked (GlcNAc...) asparagine glycan is attached at asparagine 134. Residues asparagine 142 and aspartate 143 each contribute to the Ca(2+) site.

It belongs to the true venom lectin family. As to quaternary structure, dimer. Probably disulfide-linked homodimer. As to expression, expressed by the venom gland.

The protein localises to the secreted. Functionally, galactose-binding lectin that binds to and agglutinates erythrocytes in a calcium-dependent manner. The protein is C-type lectin galactose-binding isoform of Pseudechis australis (Mulga snake).